A 215-amino-acid chain; its full sequence is Large ribosomal subunit protein uL3 (215 aa).

Gln156 is modified (N5-methylglutamine).

It belongs to the universal ribosomal protein uL3 family. In terms of assembly, part of the 50S ribosomal subunit. Forms a cluster with proteins L14 and L19. Methylated by PrmB.

In terms of biological role, one of the primary rRNA binding proteins, it binds directly near the 3'-end of the 23S rRNA, where it nucleates assembly of the 50S subunit. This is Large ribosomal subunit protein uL3 from Xylella fastidiosa (strain M12).